The chain runs to 300 residues: MNIILEILLLLITIIYSYLESLVKFFIPQRRKSVAGEIVLITGAGHGIGRQTTYEFAKRQSILVLWDINKRGVEETAAECRKLGVTAHAYVVDCSNREEIYRSLNQVKKEVGDVTIVVNNAGTVYPADLLSTKDEEITKTFEVNILGHFWITKALLPSMMERNHGHIVTVASVCGHEGIPYLIPYCSSKFAAVGFHRGLTSELQALGKTGIKTSCLCPVFVNTGFTKNPSTRLWPVLETDEVVRSLIDGILTNKKMIFVPSYINIFLRLQKFLPERASAILNRMQNIQFEAVVGHKIKMK.

A signal peptide spans 1–19 (MNIILEILLLLITIIYSYL). A Phosphoserine modification is found at serine 33. 40–67 (LITGAGHGIGRQTTYEFAKRQSILVLWD) is a binding site for NAD(+). Residue serine 172 coordinates substrate. Catalysis depends on tyrosine 185, which acts as the Proton acceptor. Position 189 (lysine 189) interacts with NAD(+).

The protein belongs to the short-chain dehydrogenases/reductases (SDR) family. In terms of tissue distribution, highly expressed in the liver. Also detected in ovary, bone marrow, kidney, brain, lung, skeletal muscle, bladder and testis.

Its subcellular location is the lipid droplet. The protein resides in the endoplasmic reticulum. The protein localises to the cytoplasm. The catalysed reaction is 17beta-estradiol + NAD(+) = estrone + NADH + H(+). It catalyses the reaction all-trans-retinol + NAD(+) = all-trans-retinal + NADH + H(+). It carries out the reaction all-trans-retinal + NAD(+) + H2O = all-trans-retinoate + NADH + 2 H(+). Functionally, plays a pivotal role in hepatic lipid metabolism. In vitro, it catalyzes the oxidation of a variety of lipid substrates, including 17beta-estradiol, retinol, retinal, and leukotriene B4. In terms of biological role, has retinol/retinal dehydrogenase activity in vitro. Its function is as follows. Does not have retinol/retinal dehydrogenase activity in vitro. The polypeptide is 17-beta-hydroxysteroid dehydrogenase 13 (Homo sapiens (Human)).